A 132-amino-acid polypeptide reads, in one-letter code: Large ribosomal subunit protein bL12 (132 aa).

This sequence belongs to the bacterial ribosomal protein bL12 family. In terms of assembly, homodimer. Part of the ribosomal stalk of the 50S ribosomal subunit. Forms a multimeric L10(L12)X complex, where L10 forms an elongated spine to which 2 to 4 L12 dimers bind in a sequential fashion. Binds GTP-bound translation factors.

Its function is as follows. Forms part of the ribosomal stalk which helps the ribosome interact with GTP-bound translation factors. Is thus essential for accurate translation. The polypeptide is Large ribosomal subunit protein bL12 (Chloroflexus aggregans (strain MD-66 / DSM 9485)).